Here is a 162-residue protein sequence, read N- to C-terminus: MQFLTSLAAAASLVSLASARISGIALPQTVKAGDNINAIVVTEGYIQSVQDIAIAFGVAPAASAYPGTLSTLLGSFYLGPEQSNVQNNITEPITIPESLVPGEYVIAASLFSLYGASSSPTVSNYNVTVNVGNETSTTYVRSQFYVGNSNSTVCLGGYTRKI.

Residues 1-19 form the signal peptide; the sequence is MQFLTSLAAAASLVSLASA. N-linked (GlcNAc...) asparagine glycans are attached at residues N88, N126, N133, and N150. The interval 103 to 132 is BAK1/SERK3-binding; it reads EYVIAASLFSLYGASSSPTVSNYNVTVNVG.

The protein belongs to the NIS1 effector family. Interacts with the host pattern recognition receptor (PRR)-associated kinases BAK1/SERK3, BKK1/SERK4 and BIK1.

The protein localises to the secreted. It is found in the host cytoplasm. In terms of biological role, secreted effector that induces necrotic lesions in Nicotiana benthamiana. Interacts with the host receptor-like kinases (RLKs) BAK1/SERK3 and BKK1/SERK4, inhibits their kinase activity and suppresses INF1-induced pathogen-associated molecular pattern (PAMP)-triggered immunity (PTI) in N.benthamiana. Also interacts with the host receptor-like cytoplasmic kinase (RLCK) BIK1 and inhibits its kinase activity, thereby inhibiting PAMP-induced ROS generation. In PTI, phosphorylation relaying by RLKs and RLCKs is critical for the initiation of downstream signaling. This is Necrosis-inducing secreted protein 1 from Colletotrichum orbiculare (strain 104-T / ATCC 96160 / CBS 514.97 / LARS 414 / MAFF 240422) (Cucumber anthracnose fungus).